We begin with the raw amino-acid sequence, 572 residues long: Proline--tRNA ligase (572 aa).

This sequence belongs to the class-II aminoacyl-tRNA synthetase family. ProS type 1 subfamily. Homodimer.

It is found in the cytoplasm. It catalyses the reaction tRNA(Pro) + L-proline + ATP = L-prolyl-tRNA(Pro) + AMP + diphosphate. Its function is as follows. Catalyzes the attachment of proline to tRNA(Pro) in a two-step reaction: proline is first activated by ATP to form Pro-AMP and then transferred to the acceptor end of tRNA(Pro). As ProRS can inadvertently accommodate and process non-cognate amino acids such as alanine and cysteine, to avoid such errors it has two additional distinct editing activities against alanine. One activity is designated as 'pretransfer' editing and involves the tRNA(Pro)-independent hydrolysis of activated Ala-AMP. The other activity is designated 'posttransfer' editing and involves deacylation of mischarged Ala-tRNA(Pro). The misacylated Cys-tRNA(Pro) is not edited by ProRS. In Photorhabdus laumondii subsp. laumondii (strain DSM 15139 / CIP 105565 / TT01) (Photorhabdus luminescens subsp. laumondii), this protein is Proline--tRNA ligase.